The primary structure comprises 1178 residues: Tricalbin-2 (1178 aa).

The segment covering 1 to 17 has biased composition (polar residues); sequence MSPNSSKTRTDQISSMP. The disordered stretch occupies residues 1 to 27; that stretch reads MSPNSSKTRTDQISSMPGINEATKVES. The Cytoplasmic segment spans residues 1–98; sequence MSPNSSKTRT…NLLPDKFYGD (98 aa). Residues 99 to 119 traverse the membrane as a helical segment; it reads WYHEVAILIIAGLCSFVLGYF. Residue Lys-120 is a topological domain, extracellular. The chain crosses the membrane as a helical span at residues 121–141; it reads FSLASVLIVMLTTGMLYRTSS. Residues 142–1178 are Cytoplasmic-facing; the sequence is KKYRESLRDL…TGDKKSEEKQ (1037 aa). Positions 164 to 367 constitute an SMP-LTD domain; the sequence is DYESVEWLNT…PPFSLQLNIP (204 aa). C2 domains lie at 358-481, 504-628, and 632-749; these read PPFS…EKVH, PKKL…LKVT, and RPVD…DKYT. A coiled-coil region spans residues 784-821; that stretch reads LSLEEAKEVDEINEKKDKLEKQKSTLDDKNISKEEKER. The C2 4 domain occupies 962 to 1086; that stretch reads QVSWFPVTAT…DPESDTTFNI (125 aa). A Phosphoserine modification is found at Ser-991.

Belongs to the tricalbin family. In terms of assembly, interacts with TCB1 and TCB3 via its C-terminal domain.

The protein localises to the cell membrane. Its subcellular location is the endoplasmic reticulum membrane. In terms of biological role, may play a role in membrane trafficking. This chain is Tricalbin-2 (TCB2), found in Saccharomyces cerevisiae (strain ATCC 204508 / S288c) (Baker's yeast).